A 784-amino-acid chain; its full sequence is Probable aminopeptidase 1 (784 aa).

Substrate is bound by residues Glu-103 and 236–240; that span reads GAMEN. Position 271 (His-271) interacts with Zn(2+). Glu-272 acts as the Proton acceptor in catalysis. The Zn(2+) site is built by His-275 and Glu-294.

It belongs to the peptidase M1 family. Zn(2+) serves as cofactor.

The protein localises to the cytoplasm. This chain is Probable aminopeptidase 1 (ape1), found in Saccharolobus solfataricus (strain ATCC 35092 / DSM 1617 / JCM 11322 / P2) (Sulfolobus solfataricus).